A 349-amino-acid polypeptide reads, in one-letter code: tRNA pseudouridine synthase D (349 aa).

Substrate is bound at residue Phe27. Asp80 functions as the Nucleophile in the catalytic mechanism. Asn129 contributes to the substrate binding site. The 149-residue stretch at 155 to 303 (GVPNYFGAQR…VEAARRAMLL (149 aa)) folds into the TRUD domain. Phe329 is a substrate binding site.

The protein belongs to the pseudouridine synthase TruD family.

The catalysed reaction is uridine(13) in tRNA = pseudouridine(13) in tRNA. Functionally, responsible for synthesis of pseudouridine from uracil-13 in transfer RNAs. The polypeptide is tRNA pseudouridine synthase D (Klebsiella pneumoniae subsp. pneumoniae (strain ATCC 700721 / MGH 78578)).